The chain runs to 269 residues: MSRLQTRFAELKQADRAALVTFVTAGDPDYETSLAILKGLPEAGADVIELGMPFTDPMADGPAIQLANIRALGAGQNLVKTLRMVRAFREGDRTTPLVLMGYFNPIHYYGVERFIAEAREAGVDGLIVVDLPPEHNEDLCDPAQAAGLDFIRLTTPTTDDKRLPRVLAGSSGFVYYVSVAGVTGAHAASLEHVEQAVARLRRHTDLPLCIGFGIRSPEHAGSVARLAEGVVVGSALVDRIAKAGSKEQAVGDVLGLCRELAEGVRRARR.

Residues E49 and D60 each act as proton acceptor in the active site.

Belongs to the TrpA family. As to quaternary structure, tetramer of two alpha and two beta chains.

It carries out the reaction (1S,2R)-1-C-(indol-3-yl)glycerol 3-phosphate + L-serine = D-glyceraldehyde 3-phosphate + L-tryptophan + H2O. It functions in the pathway amino-acid biosynthesis; L-tryptophan biosynthesis; L-tryptophan from chorismate: step 5/5. The alpha subunit is responsible for the aldol cleavage of indoleglycerol phosphate to indole and glyceraldehyde 3-phosphate. This chain is Tryptophan synthase alpha chain, found in Azotobacter vinelandii (strain DJ / ATCC BAA-1303).